Reading from the N-terminus, the 54-residue chain is Potassium channel toxin alpha-KTx 14.x (54 aa).

The first 23 residues, 1-23, serve as a signal peptide directing secretion; sequence MKIFFAILLILAVCSMAIWTVNG. 3 disulfide bridges follow: Cys-30–Cys-46, Cys-36–Cys-51, and Cys-40–Cys-53.

It belongs to the short scorpion toxin superfamily. Potassium channel inhibitor family. Alpha-KTx 14 subfamily. In terms of tissue distribution, expressed by the venom gland.

It localises to the secreted. Its function is as follows. Potassium channels inhibitor. This is Potassium channel toxin alpha-KTx 14.x from Olivierus martensii (Manchurian scorpion).